The following is a 1859-amino-acid chain: DNA-directed RNA polymerase subunit beta'' (1859 aa).

The Zn(2+) site is built by cysteine 286, cysteine 359, cysteine 366, and cysteine 369.

The protein belongs to the RNA polymerase beta' chain family. RpoC2 subfamily. As to quaternary structure, in plastids the minimal PEP RNA polymerase catalytic core is composed of four subunits: alpha, beta, beta', and beta''. When a (nuclear-encoded) sigma factor is associated with the core the holoenzyme is formed, which can initiate transcription. It depends on Zn(2+) as a cofactor.

The protein resides in the plastid. It localises to the chloroplast. The catalysed reaction is RNA(n) + a ribonucleoside 5'-triphosphate = RNA(n+1) + diphosphate. Its function is as follows. DNA-dependent RNA polymerase catalyzes the transcription of DNA into RNA using the four ribonucleoside triphosphates as substrates. The sequence is that of DNA-directed RNA polymerase subunit beta'' from Oltmannsiellopsis viridis (Marine flagellate).